Here is a 323-residue protein sequence, read N- to C-terminus: Chitin-binding lectin 1 (323 aa).

The signal sequence occupies residues 1–22 (MKETAISVLALLTLFLLEVVSA). Proline 50, proline 51, proline 53, and proline 55 each carry 4-hydroxyproline. O-linked (Ara...) hydroxyproline glycosylation is found at proline 50, proline 51, proline 53, and proline 55. Chitin-binding type-1 domains follow at residues 58 to 101 (YPQC…QCPG) and 105 to 149 (EGRC…QCKL). 8 disulfides stabilise this stretch: cysteine 61-cysteine 77, cysteine 70-cysteine 83, cysteine 76-cysteine 90, cysteine 95-cysteine 99, cysteine 108-cysteine 125, cysteine 117-cysteine 131, cysteine 124-cysteine 138, and cysteine 143-cysteine 147. The chitin site is built by serine 78, tryptophan 80, tryptophan 82, and tyrosine 89. Residues 150 to 210 (PSPPPPPPPP…PPPPPPALPY (61 aa)) form an extensin-like region. Residue serine 151 is glycosylated (O-linked (Gal) serine). 10 tandem repeats follow at residues 151-159 (SPPPPPPPP), 160-164 (SPPPP), 165-167 (SPP), 168-172 (SPPPP), 173-180 (SPPPPPPP), 181-185 (SPPPP), 186-190 (SPPPP), 191-192 (SP), 193-198 (SPPPPP), and 200-206 (SPPPPPP). The segment at 151-206 (SPPPPPPPPSPPPPSPPSPPPPSPPPPPPPSPPPPSPPPPSPSPPPPPASPPPPPP) is 10 X approximate repeats of S-P-P-P-P. 4-hydroxyproline is present on residues proline 152, proline 153, proline 154, proline 155, proline 156, proline 157, proline 158, and proline 159. O-linked (Ara...) hydroxyproline glycans are attached at residues proline 152, proline 153, proline 154, proline 155, proline 156, proline 157, proline 158, and proline 159. The tract at residues 154–203 (PPPPPPSPPPPSPPSPPPPSPPPPPPPSPPPPSPPPPSPSPPPPPASPPP) is disordered. A glycan (O-linked (Gal) serine) is linked at serine 160. 4-hydroxyproline occurs at positions 161, 162, 163, and 164. 4 O-linked (Ara...) hydroxyproline glycosylation sites follow: proline 161, proline 162, proline 163, and proline 164. Serine 165 is a glycosylation site (O-linked (Gal) serine). 2 positions are modified to 4-hydroxyproline: proline 166 and proline 167. Proline 166 and proline 167 each carry an O-linked (Ara...) hydroxyproline glycan. O-linked (Gal) serine glycosylation occurs at serine 168. A 4-hydroxyproline mark is found at proline 169, proline 170, proline 171, and proline 172. O-linked (Ara...) hydroxyproline glycans are attached at residues proline 169, proline 170, proline 171, and proline 172. A glycan (O-linked (Gal) serine) is linked at serine 173. A 4-hydroxyproline mark is found at proline 174, proline 175, proline 176, proline 177, proline 178, proline 179, and proline 180. Proline 174, proline 175, proline 176, proline 177, proline 178, proline 179, and proline 180 each carry an O-linked (Ara...) hydroxyproline glycan. O-linked (Gal) serine glycosylation is present at serine 181. 4 positions are modified to 4-hydroxyproline: proline 182, proline 183, proline 184, and proline 185. Residues proline 182, proline 183, proline 184, and proline 185 are each glycosylated (O-linked (Ara...) hydroxyproline). Serine 186 is a glycosylation site (O-linked (Gal) serine). Proline 187, proline 188, proline 189, and proline 190 each carry 4-hydroxyproline. 4 O-linked (Ara...) hydroxyproline glycosylation sites follow: proline 187, proline 188, proline 189, and proline 190. An O-linked (Gal) serine glycan is attached at serine 191. Position 192 is a 4-hydroxyproline (proline 192). Proline 192 carries O-linked (Ara...) hydroxyproline glycosylation. An O-linked (Gal) serine glycan is attached at serine 193. 4-hydroxyproline occurs at positions 194, 195, 196, 197, and 198. O-linked (Ara...) hydroxyproline glycosylation is found at proline 194, proline 195, proline 196, proline 197, and proline 198. Residue serine 200 is glycosylated (O-linked (Gal) serine). 4-hydroxyproline is present on residues proline 201, proline 202, proline 203, proline 204, proline 205, proline 206, and proline 209. O-linked (Ara...) hydroxyproline glycosylation is found at proline 201, proline 202, proline 203, proline 204, proline 205, proline 206, and proline 209. Chitin-binding type-1 domains follow at residues 210–253 (YPQC…QCPG) and 257–301 (EGRC…QCNT). Intrachain disulfides connect cysteine 213/cysteine 229, cysteine 222/cysteine 235, cysteine 228/cysteine 242, cysteine 247/cysteine 251, cysteine 260/cysteine 277, cysteine 269/cysteine 283, cysteine 276/cysteine 290, and cysteine 295/cysteine 299. Residues serine 230, tryptophan 232, tryptophan 234, and tyrosine 241 each contribute to the chitin site.

This sequence in the central section; belongs to the extensin family. In terms of assembly, homodimer. In terms of processing, heavily glycosylated with beta-arabinose on hydroxyprolines and with alpha-galactose on serines of the extensin-like domain. As no other sugars could be detected in the native lectin, it is unlikely that the three putative N-glycosylation sites are actually glycosylated. The N-terminus is blocked. The N-terminal sequences proposed in PubMed:9022287 and PubMed:11056399 originate probably from truncated proteins.

Its function is as follows. This protein might function as a defense against chitin containing pathogens. Binds to several branched or linear N-acetyllactosamine-containing glycosphingolipids and also to lactosylceramide with sphingosine and non-hydroxy fatty acids. The polypeptide is Chitin-binding lectin 1 (Solanum tuberosum (Potato)).